The chain runs to 337 residues: Transcription initiation factor IIB (337 aa).

The segment at 37-68 (YTVECPECGSRALVRDYERAELVCSECGLVID) adopts a TFIIB-type zinc-finger fold. 4 residues coordinate Zn(2+): Cys-41, Cys-44, Cys-60, and Cys-63. Repeat copies occupy residues 154–237 (SELD…SREL) and 248–329 (DYIP…ELAE).

The protein belongs to the TFIIB family.

Its function is as follows. Stabilizes TBP binding to an archaeal box-A promoter. Also responsible for recruiting RNA polymerase II to the pre-initiation complex (DNA-TBP-TFIIB). This Methanothrix thermoacetophila (strain DSM 6194 / JCM 14653 / NBRC 101360 / PT) (Methanosaeta thermophila) protein is Transcription initiation factor IIB.